A 134-amino-acid polypeptide reads, in one-letter code: uncharacterized protein (134 aa).

This is an uncharacterized protein from Ictaluridae (bullhead catfishes).